The chain runs to 679 residues: MSRKMLVTCALPYANGAIHLGHMLEHIQADIWVRFQRMRGNEIYFVCADDAHGTPIMLNAAKQGITPEQLIEKAKADHVADFKGFNISFDNYHSTHSEENREITTEMYKKLRANGFIKSRVISQLFDPEKQMFLPDRFVKGTCPKCKAEDQYGDNCEVCASTYSPMDLINPRSAISGATPIVKESEHFFFDLPNFEGMLKEWTRSGSLQSEIANKMQEWFESGLQQWDISRDAPYFGFPIPDAENKFFYVWLDAPIGYMASFKNLCDRTGLNFDEFWKKDSETELYHFIGKDIVYFHSLFWPAMLDGCELRKPTNVFAHGYVTVDGVKMSKSRGTFIQASTYLKHIDPECLRYYYAAKLNERIEDLDLSLEDFVQRVNSDIVNKLVNLASRNASFIAKRFEGKLADKLEDEALFAEFIAQSEQIAAHYENREFNKAIRLIMDLCDKANKYVDDKAPWVIAKQEGCDAQLQAVCSMGIELFRVLMSYLKPVLPQLAERAEAFLQTELTWDNIQQPLLGQNVAPFKSLFSRLEKKQIDAVIEETKALFAAQNKEKGKQKVENTENTAVEPIAAEITIDDFAKLDLRVAKVISCEAVPESNKLLKFQLDLGDHQRQVLSGIKAAYNNPEELVGRFVIMVANLAPRKMKFGVSEGMILSAGTGGADLFLLSADEGIRPGMQVK.

Positions 12 to 22 (PYANGAIHLGH) match the 'HIGH' region motif. Zn(2+)-binding residues include Cys143, Cys146, Cys156, and Cys159. The short motif at 328–332 (KMSKS) is the 'KMSKS' region element. Lys331 serves as a coordination point for ATP. Positions 577-679 (DFAKLDLRVA…EGIRPGMQVK (103 aa)) constitute a tRNA-binding domain.

It belongs to the class-I aminoacyl-tRNA synthetase family. MetG type 1 subfamily. Homodimer. Zn(2+) serves as cofactor.

The protein localises to the cytoplasm. It catalyses the reaction tRNA(Met) + L-methionine + ATP = L-methionyl-tRNA(Met) + AMP + diphosphate. In terms of biological role, is required not only for elongation of protein synthesis but also for the initiation of all mRNA translation through initiator tRNA(fMet) aminoacylation. This Actinobacillus pleuropneumoniae serotype 5b (strain L20) protein is Methionine--tRNA ligase.